The sequence spans 373 residues: tRNA (guanine(26)-N(2))-dimethyltransferase (373 aa).

The 364-residue stretch at 2 to 365 folds into the Trm1 methyltransferase domain; that stretch reads KIISEGETKL…AELSDLVVLI (364 aa). Positions 35, 66, 86, 113, and 114 each coordinate S-adenosyl-L-methionine.

This sequence belongs to the class I-like SAM-binding methyltransferase superfamily. Trm1 family.

It catalyses the reaction guanosine(26) in tRNA + 2 S-adenosyl-L-methionine = N(2)-dimethylguanosine(26) in tRNA + 2 S-adenosyl-L-homocysteine + 2 H(+). Dimethylates a single guanine residue at position 26 of a number of tRNAs using S-adenosyl-L-methionine as donor of the methyl groups. The sequence is that of tRNA (guanine(26)-N(2))-dimethyltransferase from Methanococcus maripaludis (strain C7 / ATCC BAA-1331).